The primary structure comprises 513 residues: Voltage-gated potassium channel regulatory subunit KCNG1 (513 aa).

At 1 to 224 the chain is on the cytoplasmic side; it reads MTLLPGDNSD…DMVERPHSGL (224 aa). The disordered stretch occupies residues 184-204; that stretch reads EEDDALDSEGRDSEGPAEGEG. Over residues 191-204 the composition is skewed to basic and acidic residues; sequence SEGRDSEGPAEGEG. A helical transmembrane segment spans residues 225-246; that stretch reads PGKVFACLSVLFVTVTAVNLSV. At 247–267 the chain is on the extracellular side; the sequence is STLPSLREEEEQGHCSQMCHN. A helical transmembrane segment spans residues 268 to 289; that stretch reads VFIVESVCVGWFSLEFLLRLIQ. The Cytoplasmic segment spans residues 290–300; the sequence is APSKFAFLRSP. A helical membrane pass occupies residues 301 to 321; sequence LTLIDLVAILPYYITLLVDGA. Topologically, residues 322 to 338 are extracellular; the sequence is AAGRRKPGAGNSYLDKV. A helical; Voltage-sensor membrane pass occupies residues 339–359; that stretch reads GLVLRVLRALRILYVMRLARH. The Cytoplasmic segment spans residues 360–374; it reads SLGLQTLGLTARRCT. A helical membrane pass occupies residues 375-396; it reads REFGLLLLFLCVAIALFAPLLY. Topologically, residues 397–411 are extracellular; that stretch reads VIENEMADSPEFTSI. An intramembrane region (helical) is located at residues 412–423; sequence PACYWWAVITMT. Residues 424-429 carry the Selectivity filter motif; it reads TVGYGD. The stretch at 424-431 is an intramembrane region; sequence TVGYGDMV. The Extracellular portion of the chain corresponds to 432-438; the sequence is PRSTPGQ. The helical transmembrane segment at 439–467 threads the bilayer; the sequence is VVALSSILSGILLMAFPVTSIFHTFSRSY. At 468–513 the chain is on the cytoplasmic side; the sequence is LELKQEQERVMFRRAQFLIKTKSQLSVSQDSDILFGSASSDTRDNN.

This sequence belongs to the potassium channel family. G (TC 1.A.1.2) subfamily. Kv6.1/KCNG1 sub-subfamily. As to quaternary structure, heterotetramer with KCNB1. Heterotetramer with KCNB2. As to expression, expressed in brain and placenta, and at much lower levels in kidney and pancreas.

The protein resides in the cell membrane. Regulatory alpha-subunit of the voltage-gated potassium (Kv) channel which, when coassembled with KCNB1 or KCNB2, can modulate their expression and their gating kinetics by acting on deactivation upon repolarization and inactivation during maintained depolarization. Potassium channel subunit that does not form functional channels by itself. The protein is Voltage-gated potassium channel regulatory subunit KCNG1 of Homo sapiens (Human).